The chain runs to 509 residues: TFPLQLGSKLCQGKSEHCSITLSLISRFTLMMFIPLVVANARITDFSHANYIPVLDGDVLVFEQRDLLKHSSNLSEYASMIDETQKLSESFPHSHMRKLLEVDTDHLRTLLSVLKVHHRIARSLDFLGTALKVVAGTPDATDLFKIKITEAQLVESNSRQIAINSETQKQINKLTDTINKVINARKGDLVDTPHLYEALLARNRMLSTEIQNLILTITLVKSNIINPTILDHADLKPLVEQDTPIVSLIEASKIRVLQSENSIHILIAYPRVKFSCKKVAVYPVSHQHTILRLDEDTLAECEHDTFAVTGCTDTTHFTFCERSRRETCVRSLHAGNAAQCHTQPSHLREINPVDDGVVIINEAAAHVSTDGSPETLIEGTYLVTFERTATINGSEFVNLRKTLSKQPGIVRSPLLNIVGHDPVLSIPLLHRMSNENLHSIQNLMDDVESEGSPRLWFVAGVVLNFGLIGSLALYLALRRRRASREIQRTIDTFNMTEDGHKLEGGVVNN.

Asparagine 73, asparagine 392, and asparagine 494 each carry an N-linked (GlcNAc...) asparagine glycan.

The protein is Retrovirus-related Env polyprotein from transposon gypsy (env) of Drosophila melanogaster (Fruit fly).